The following is a 335-amino-acid chain: Glycerol-3-phosphate dehydrogenase [NAD(P)+] (335 aa).

NADPH contacts are provided by S10, F11, R31, and K105. Sn-glycerol 3-phosphate contacts are provided by K105, G136, and S138. A140 lines the NADPH pocket. Positions 191, 244, 254, 255, and 256 each coordinate sn-glycerol 3-phosphate. Catalysis depends on K191, which acts as the Proton acceptor. R255 is a binding site for NADPH. The NADPH site is built by V279 and E281.

This sequence belongs to the NAD-dependent glycerol-3-phosphate dehydrogenase family.

The protein resides in the cytoplasm. The catalysed reaction is sn-glycerol 3-phosphate + NAD(+) = dihydroxyacetone phosphate + NADH + H(+). It catalyses the reaction sn-glycerol 3-phosphate + NADP(+) = dihydroxyacetone phosphate + NADPH + H(+). The protein operates within membrane lipid metabolism; glycerophospholipid metabolism. In terms of biological role, catalyzes the reduction of the glycolytic intermediate dihydroxyacetone phosphate (DHAP) to sn-glycerol 3-phosphate (G3P), the key precursor for phospholipid synthesis. The protein is Glycerol-3-phosphate dehydrogenase [NAD(P)+] of Leptospira borgpetersenii serovar Hardjo-bovis (strain L550).